Here is a 726-residue protein sequence, read N- to C-terminus: Germacradienol/geosmin synthase (726 aa).

The segment at 2 to 354 (TQQPFQLPHF…TSAADVGALL (353 aa)) is germacradienol/germacrene D synthase. 9 residues coordinate Mg(2+): Asp86, Glu91, Asn267, Thr271, Gln276, Asp455, Asn598, Ser602, and Glu606. The short motif at 86 to 91 (DDHFLE) is the DDXXD motif 1; degenerate element. The interval 355–726 (ADAVAQRARS…VPRSSPALTH (372 aa)) is geosmin synthase. The short motif at 455–459 (DDYYP) is the DDXXD motif 2; degenerate element.

It belongs to the terpene synthase family. The cofactor is Mg(2+).

It catalyses the reaction (2E,6E)-farnesyl diphosphate + H2O = (1E,4S,5E,7R)-germacra-1(10),5-dien-11-ol + diphosphate. The enzyme catalyses (1E,4S,5E,7R)-germacra-1(10),5-dien-11-ol + H2O = (-)-geosmin + acetone. It carries out the reaction (2E,6E)-farnesyl diphosphate = (-)-germacrene D + diphosphate. It functions in the pathway secondary metabolite biosynthesis; geosmin biosynthesis. Its pathway is sesquiterpene biosynthesis; germacradienol biosynthesis; germacradienol from farnesyl diphosphate: step 1/1. It participates in sesquiterpene biosynthesis; germacrene D biosynthesis; germacrene D from farnesyl diphosphate: step 1/1. Functionally, tow-domain protein where the N-terminal domain catalyzes the cyclization of farnesyl diphosphate (FPP) to a 85:15 mixture of the sesquiterpene alcohol germacradienol and the sesquiterpene hydrocarbon germacrene D. The C-terminal domain partially converts the germacradienol formed into geosmin, the characteristic odoriferous ('earthy aroma') constituent of Streptomyces species. This Streptomyces coelicolor (strain ATCC BAA-471 / A3(2) / M145) protein is Germacradienol/geosmin synthase (cyc2).